The sequence spans 344 residues: N-acetyl-gamma-glutamyl-phosphate reductase (344 aa).

Residue cysteine 149 is part of the active site.

This sequence belongs to the NAGSA dehydrogenase family. Type 1 subfamily.

The protein resides in the cytoplasm. The enzyme catalyses N-acetyl-L-glutamate 5-semialdehyde + phosphate + NADP(+) = N-acetyl-L-glutamyl 5-phosphate + NADPH + H(+). It functions in the pathway amino-acid biosynthesis; L-arginine biosynthesis; N(2)-acetyl-L-ornithine from L-glutamate: step 3/4. Functionally, catalyzes the NADPH-dependent reduction of N-acetyl-5-glutamyl phosphate to yield N-acetyl-L-glutamate 5-semialdehyde. This Acidithiobacillus ferrooxidans (strain ATCC 23270 / DSM 14882 / CIP 104768 / NCIMB 8455) (Ferrobacillus ferrooxidans (strain ATCC 23270)) protein is N-acetyl-gamma-glutamyl-phosphate reductase.